Here is a 135-residue protein sequence, read N- to C-terminus: Small ribosomal subunit protein uS11 (135 aa).

Residues 1-26 (MPPKSRTAGGARKTRRKEKKNVSHGH) are disordered. Basic residues predominate over residues 12–23 (RKTRRKEKKNVS).

Belongs to the universal ribosomal protein uS11 family. Part of the 30S ribosomal subunit. Interacts with proteins S7 and S18. Binds to IF-3.

Its function is as follows. Located on the platform of the 30S subunit, it bridges several disparate RNA helices of the 16S rRNA. Forms part of the Shine-Dalgarno cleft in the 70S ribosome. The protein is Small ribosomal subunit protein uS11 of Beutenbergia cavernae (strain ATCC BAA-8 / DSM 12333 / CCUG 43141 / JCM 11478 / NBRC 16432 / NCIMB 13614 / HKI 0122).